An 872-amino-acid chain; its full sequence is Alanine--tRNA ligase (872 aa).

4 residues coordinate Zn(2+): His571, His575, Cys674, and His678.

It belongs to the class-II aminoacyl-tRNA synthetase family. The cofactor is Zn(2+).

The protein localises to the cytoplasm. It carries out the reaction tRNA(Ala) + L-alanine + ATP = L-alanyl-tRNA(Ala) + AMP + diphosphate. Its function is as follows. Catalyzes the attachment of alanine to tRNA(Ala) in a two-step reaction: alanine is first activated by ATP to form Ala-AMP and then transferred to the acceptor end of tRNA(Ala). Also edits incorrectly charged Ser-tRNA(Ala) and Gly-tRNA(Ala) via its editing domain. This is Alanine--tRNA ligase from Symbiobacterium thermophilum (strain DSM 24528 / JCM 14929 / IAM 14863 / T).